The chain runs to 570 residues: Low-affinity glucose transporter HXT1 (570 aa).

Over residues 1–20 (MNSTPDLISPQKSNSSNSYE) the composition is skewed to polar residues. A disordered region spans residues 1-51 (MNSTPDLISPQKSNSSNSYELESGRSKAMNTPEGKNESFHDNLSESQVQPA). The Cytoplasmic portion of the chain corresponds to 1–60 (MNSTPDLISPQKSNSSNSYELESGRSKAMNTPEGKNESFHDNLSESQVQPAVAPPNTGKG). Residues S23, S38, and S44 each carry the phosphoserine modification. The span at 34 to 43 (GKNESFHDNL) shows a compositional bias: basic and acidic residues. The helical transmembrane segment at 61 to 81 (VYVTVSICCVMVAFGGFIFGW) threads the bilayer. The Extracellular segment spans residues 82–116 (DTGTISGFVAQTDFLRRFGMKHHDGSHYLSKVRTG). Residues 117-137 (LIVSIFNIGCAIGGIVLAKLG) traverse the membrane as a helical segment. At 138–143 (DMYGRR) the chain is on the cytoplasmic side. Residues 144-164 (IGLIVVVVIYTIGIIIQIASI) traverse the membrane as a helical segment. Residues 165–174 (NKWYQYFIGR) lie on the Extracellular side of the membrane. Residues 175–195 (IISGLGVGGITVLSPMLISEV) form a helical membrane-spanning segment. Residues 196 to 201 (APSEMR) lie on the Cytoplasmic side of the membrane. Residues 202-222 (GTLVSCYQVMITLGIFLGYCT) traverse the membrane as a helical segment. At 223–236 (NFGTKNYSNSVQWR) the chain is on the extracellular side. N-linked (GlcNAc...) asparagine glycosylation is present at N228. Residues 237-257 (VPLGLCFAWALFMIGGMMFVP) traverse the membrane as a helical segment. Residues 258 to 340 (ESPRYLVEAG…IQSLQQLTGD (83 aa)) lie on the Cytoplasmic side of the membrane. The helical transmembrane segment at 341-357 (NYFFYYGTIVFQAVGLS) threads the bilayer. At 358-363 (DSFETS) the chain is on the extracellular side. Residues 364–381 (IVFGVVNFFSTCCSLYTV) traverse the membrane as a helical segment. Residues 382–388 (DRFGRRN) are Cytoplasmic-facing. Residues 389 to 409 (CLMWGAVGMVCCYVVYASVGV) form a helical membrane-spanning segment. Over 410 to 431 (TRLWPNGQDQPSSKGAGNCMIV) the chain is Extracellular. The helical transmembrane segment at 432-452 (FACFYIFCFATTWAPIAYVVI) threads the bilayer. The Cytoplasmic portion of the chain corresponds to 453 to 469 (SECFPLRVKSKCMSIAS). The helical transmembrane segment at 470–490 (AANWIWGFLISFFTPFITGAI) threads the bilayer. Position 491 (N491) is a topological domain, extracellular. The helical transmembrane segment at 492–512 (FYYGYVFMGCMVFAYFYVFFF) threads the bilayer. The Cytoplasmic portion of the chain corresponds to 513–570 (VPETKGLSLEEVNDMYAEGVLPWKSASWVPVSKRGADYNADDLMHDDQPFYKSLFSRK).

This sequence belongs to the major facilitator superfamily. Sugar transporter (TC 2.A.1.1) family.

It localises to the membrane. Its function is as follows. Low-affinity glucose transporter. HXT1 is as well involved in the transport of mannose. This Saccharomyces cerevisiae (strain ATCC 204508 / S288c) (Baker's yeast) protein is Low-affinity glucose transporter HXT1 (HXT1).